We begin with the raw amino-acid sequence, 114 residues long: Gonadotropin subunit beta-1 (114 aa).

A signal peptide spans 1–19; sequence MQLVLMAAVLALAEVGCFG. 6 disulfides stabilise this stretch: C20–C66, C32–C80, C37–C114, C43–C92, C47–C94, and C97–C104. N-linked (GlcNAc...) asparagine glycosylation occurs at N24.

The protein belongs to the glycoprotein hormones subunit beta family. Heterodimer of an alpha and a beta chain.

It localises to the secreted. Its function is as follows. Involved in gametogenesis and steroidogenesis. The polypeptide is Gonadotropin subunit beta-1 (cgba) (Fundulus heteroclitus (Killifish)).